The primary structure comprises 1033 residues: Isoleucine--tRNA ligase 2 (1033 aa).

The 'HIGH' region motif lies at 47-57 (PTANGLPHVGH). The 'KMSKS' region signature appears at 590 to 594 (KMSKS). Residue Lys593 participates in ATP binding.

This sequence belongs to the class-I aminoacyl-tRNA synthetase family. IleS type 2 subfamily. In terms of assembly, monomer. Zn(2+) serves as cofactor.

Its subcellular location is the cytoplasm. It catalyses the reaction tRNA(Ile) + L-isoleucine + ATP = L-isoleucyl-tRNA(Ile) + AMP + diphosphate. In terms of biological role, catalyzes the attachment of isoleucine to tRNA(Ile). As IleRS can inadvertently accommodate and process structurally similar amino acids such as valine, to avoid such errors it has two additional distinct tRNA(Ile)-dependent editing activities. One activity is designated as 'pretransfer' editing and involves the hydrolysis of activated Val-AMP. The other activity is designated 'posttransfer' editing and involves deacylation of mischarged Val-tRNA(Ile). This Bacillus cereus (strain ATCC 14579 / DSM 31 / CCUG 7414 / JCM 2152 / NBRC 15305 / NCIMB 9373 / NCTC 2599 / NRRL B-3711) protein is Isoleucine--tRNA ligase 2.